The following is a 120-amino-acid chain: U-scoloptoxin(16)-Er2a (120 aa).

Positions 1–26 (MNTVSVVQFLAVGCAVFVLYGRGVFA) are cleaved as a signal peptide.

The protein belongs to the scoloptoxin-16 family. Contains 4 disulfide bonds. Expressed by the venom gland.

The protein localises to the secreted. This chain is U-scoloptoxin(16)-Er2a, found in Ethmostigmus rubripes (Giant centipede).